The chain runs to 356 residues: MSRILVIGAGGVGVITALSLWLKKESDVSLVVRSDYDRVLKHGYTIESCDYGRLEGWRPHHIYSSVEDAASAADNQGYNYIVVTTKNIIDGPVNSRVSNIIRPVLEKNKELHGPQLTTHILLVQNGIDIEKEIWAEFPREQYRYTVLSGIQLIGSTKIGSGHISQVGQDHLSCGAFDPQDAAAIQAANDFVRMYSNEGQNFVEFDPRVRYSRWKKLLYNAAINTSTALVGLDVPRCLEFGVNKKSTEIEVFHPAMREIIAIAASEGIIIEEEFITMFTEITRKKVFKPSMCVDCEKGQLMELEVILGNPIRIAKRNGVATPTLSILYNLLVLVQAKLKERKGLLKFDEKTATLVDE.

Its subcellular location is the cytoplasm. It is found in the nucleus. This is an uncharacterized protein from Saccharomyces cerevisiae (strain ATCC 204508 / S288c) (Baker's yeast).